Here is a 642-residue protein sequence, read N- to C-terminus: Threonine--tRNA ligase (642 aa).

Residues 1-61 (MPVITLPDGS…ENDATLSIIT (61 aa)) form the TGS domain. The catalytic stretch occupies residues 243 to 534 (DHRKIGKQLD…LTEEFAGFFP (292 aa)). Positions 334, 385, and 511 each coordinate Zn(2+).

It belongs to the class-II aminoacyl-tRNA synthetase family. As to quaternary structure, homodimer. Requires Zn(2+) as cofactor.

It localises to the cytoplasm. The enzyme catalyses tRNA(Thr) + L-threonine + ATP = L-threonyl-tRNA(Thr) + AMP + diphosphate + H(+). Functionally, catalyzes the attachment of threonine to tRNA(Thr) in a two-step reaction: L-threonine is first activated by ATP to form Thr-AMP and then transferred to the acceptor end of tRNA(Thr). Also edits incorrectly charged L-seryl-tRNA(Thr). This is Threonine--tRNA ligase from Salmonella heidelberg (strain SL476).